A 231-amino-acid polypeptide reads, in one-letter code: Peroxisomal membrane protein 11E (231 aa).

Topologically, residues Met-1–Lys-91 are cytoplasmic. A helical transmembrane segment spans residues Asn-92–Gly-108. Over Arg-109–Ser-202 the chain is Lumenal. A helical membrane pass occupies residues Pro-203–Leu-222. At Pro-223 to Pro-231 the chain is on the cytoplasmic side.

It belongs to the peroxin-11 family. Homooligomer. Interacts with ARC5 and FIS1B on peroxisomes. Expressed in leaves and developing siliques.

Its subcellular location is the peroxisome membrane. Its function is as follows. Involved in peroxisomal proliferation. Promotes peroxisomal duplication, aggregation or elongation without fission. This chain is Peroxisomal membrane protein 11E (PEX11E), found in Arabidopsis thaliana (Mouse-ear cress).